Reading from the N-terminus, the 454-residue chain is 5-hydroxytryptamine receptor 3D (454 aa).

The N-terminal stretch at 1–24 (MQKHSPGPPALALLSQSLLTTGNG) is a signal peptide. The Extracellular portion of the chain corresponds to 25 to 232 (DTLIINCPGF…IRRRCRPSPY (208 aa)). Asn66 carries N-linked (GlcNAc...) asparagine glycosylation. A helical membrane pass occupies residues 233-253 (VVNFLVPSGILIAIDALSFYL). The Cytoplasmic portion of the chain corresponds to 254-264 (PLESGNCAPFK). A helical transmembrane segment spans residues 265–285 (MTVLLGYSVFLLMMNDLLPAT). The Extracellular segment spans residues 286–306 (STSSHASLVAPLALMQTPLPA). The chain crosses the membrane as a helical span at residues 307–327 (GVYFALCLSLMVGSLLETIFI). Residues 328–431 (THLLHVATTQ…WVQFSHAMDA (104 aa)) lie on the Cytoplasmic side of the membrane. The disordered stretch occupies residues 363-410 (PQKGNKGPGLTPTHLPGVKEPEVSAGQMPGPGEAELTGGSEWTRAQRE). Residues 399–430 (TGGSEWTRAQREHEAQKQHSVELWVQFSHAMD) are HA-stretch; determines single-channel conductance in 5-HT3 receptors. Residues 432–452 (LLFRLYLLFMASSIITVICLW) form a helical membrane-spanning segment. The Extracellular portion of the chain corresponds to 453–454 (NT).

This sequence belongs to the ligand-gated ion channel (TC 1.A.9) family. 5-hydroxytryptamine receptor (TC 1.A.9.2) subfamily. HTR3D sub-subfamily. In terms of assembly, forms homopentameric as well as heteropentameric serotonin-activated cation-selective channel complexes with HTR3A. The homomeric complex is not functional. Heteropentameric complexes display properties which resemble that of neuronal serotonin-activated channels in vivo. In terms of tissue distribution, expressed in liver, as well as fetal and adult colon and kidney.

It localises to the postsynaptic cell membrane. The protein localises to the cell membrane. It catalyses the reaction Na(+)(in) = Na(+)(out). It carries out the reaction K(+)(in) = K(+)(out). The enzyme catalyses Ca(2+)(in) = Ca(2+)(out). Functionally, forms serotonin (5-hydroxytryptamine/5-HT3)-activated cation-selective channel complexes, which when activated cause fast, depolarizing responses in neurons. The polypeptide is 5-hydroxytryptamine receptor 3D (Homo sapiens (Human)).